The chain runs to 71 residues: Large ribosomal subunit protein bL31 (71 aa).

Zn(2+) contacts are provided by cysteine 16, cysteine 18, cysteine 37, and cysteine 40.

It belongs to the bacterial ribosomal protein bL31 family. Type A subfamily. As to quaternary structure, part of the 50S ribosomal subunit. Zn(2+) serves as cofactor.

In terms of biological role, binds the 23S rRNA. This is Large ribosomal subunit protein bL31 from Wigglesworthia glossinidia brevipalpis.